Here is a 276-residue protein sequence, read N- to C-terminus: Putative pyruvate, phosphate dikinase regulatory protein (276 aa).

151-158 is an ADP binding site; sequence GISRTSKT.

The protein belongs to the pyruvate, phosphate/water dikinase regulatory protein family. PDRP subfamily.

It catalyses the reaction N(tele)-phospho-L-histidyl/L-threonyl-[pyruvate, phosphate dikinase] + ADP = N(tele)-phospho-L-histidyl/O-phospho-L-threonyl-[pyruvate, phosphate dikinase] + AMP + H(+). The catalysed reaction is N(tele)-phospho-L-histidyl/O-phospho-L-threonyl-[pyruvate, phosphate dikinase] + phosphate + H(+) = N(tele)-phospho-L-histidyl/L-threonyl-[pyruvate, phosphate dikinase] + diphosphate. Bifunctional serine/threonine kinase and phosphorylase involved in the regulation of the pyruvate, phosphate dikinase (PPDK) by catalyzing its phosphorylation/dephosphorylation. The sequence is that of Putative pyruvate, phosphate dikinase regulatory protein from Streptococcus agalactiae serotype Ia (strain ATCC 27591 / A909 / CDC SS700).